A 484-amino-acid chain; its full sequence is UDP-N-acetylmuramoyl-L-alanyl-D-glutamate--L-lysine ligase (484 aa).

Residue S43 participates in UDP-N-acetyl-alpha-D-muramoyl-L-alanyl-D-glutamate binding. 119–125 (GTKGKTT) provides a ligand contact to ATP. Residues 161 to 162 (TT), S188, and R196 contribute to the UDP-N-acetyl-alpha-D-muramoyl-L-alanyl-D-glutamate site. The residue at position 230 (K230) is an N6-carboxylysine. The L-lysine recognition motif motif lies at 405-408 (DDPN).

It belongs to the MurCDEF family. MurE subfamily. Post-translationally, carboxylation is probably crucial for Mg(2+) binding and, consequently, for the gamma-phosphate positioning of ATP.

The protein localises to the cytoplasm. The enzyme catalyses UDP-N-acetyl-alpha-D-muramoyl-L-alanyl-D-glutamate + L-lysine + ATP = UDP-N-acetyl-alpha-D-muramoyl-L-alanyl-gamma-D-glutamyl-L-lysine + ADP + phosphate + H(+). It participates in cell wall biogenesis; peptidoglycan biosynthesis. In terms of biological role, catalyzes the addition of L-lysine to the nucleotide precursor UDP-N-acetylmuramoyl-L-alanyl-D-glutamate (UMAG) in the biosynthesis of bacterial cell-wall peptidoglycan. This Streptococcus agalactiae serotype III (strain NEM316) protein is UDP-N-acetylmuramoyl-L-alanyl-D-glutamate--L-lysine ligase.